The primary structure comprises 2592 residues: 6-hydroxymellein synthase cdmE (2592 aa).

The segment covering 1–11 (MVLHPSDRRFP) has biased composition (basic and acidic residues). Positions 1–25 (MVLHPSDRRFPETNGVGGHSKDSSA) are disordered. The region spanning 32 to 456 (LEPLAIVGFA…GTNAHVVLES (425 aa)) is the Ketosynthase family 3 (KS3) domain. Residues Cys-205, His-340, and His-379 each act as for beta-ketoacyl synthase activity in the active site. Positions 589 to 910 (VFTGQGAQWP…RYSHTITRKK (322 aa)) are malonyl-CoA:ACP transacylase (MAT) domain. The segment at 978-1113 (HELLGSPDPD…GFIESKCESD (136 aa)) is N-terminal hotdog fold. The interval 978–1291 (HELLGSPDPD…IRGTELCLLS (314 aa)) is dehydratase (DH) domain. The PKS/mFAS DH domain maps to 978 to 1296 (HELLGSPDPD…LCLLSAGRGD (319 aa)). The C-terminal hotdog fold stretch occupies residues 1140-1296 (TQIGSISAFY…LCLLSAGRGD (157 aa)). Residues Ile-1462 and Glu-1484 each coordinate S-adenosyl-L-methionine. The segment at 1483 to 1591 (LEIGTGFGSV…HSLLKPGGKL (109 aa)) is methyltransferase (CMeT) domain. An enoyl reductase (ER) domain region spans residues 1887 to 2199 (GLLVWSDDEA…NDSNMDTAVI (313 aa)). The tract at residues 2223–2398 (ATYVIAGGLG…IPGMSVNLGN (176 aa)) is ketoreductase (KR) domain. In terms of domain architecture, Carrier spans 2509–2586 (VAASHVTEAI…GLSEKIARQS (78 aa)). The residue at position 2546 (Ser-2546) is an O-(pantetheine 4'-phosphoryl)serine.

It carries out the reaction 5 malonyl-CoA + AH2 + 5 H(+) = 6-hydroxymellein + A + 5 CO2 + 5 CoA + H2O. Its pathway is secondary metabolite biosynthesis; terpenoid biosynthesis. Its function is as follows. Highly reducing polyketide synthase; part of the gene cluster that mediates the biosynthesis of chrodrimanin B, a meroterpenoid that acts as a potent blocker of insect GABA-gated chloride channels. The first step of the pathway is the biosynthesis of 6-hydroxymellein by the polyketide synthase cdmE. The prenyltransferase cdmH acts as a 6-hydroxymellein 5-farnesyltransferase and produces the hydrophobic metabolite verruculide C. The FAD-dependent monooxygenase cdmI further converts verruculide C into verruculide B. The terpene cyclase cdmG then produced the pentacyclic molecule 3-hydroxypentacecilide A, the backbone structure of chrodrimanin B, via folding the farnesyl moiety of the substrate into the chair-boat conformation. The short-chain dehydrogenase/reductase cdmF functions as the 3-OH dehydrogenase that oxidizes the C-3 hydroxyl group of 3-hydroxypentacecilide A and produces chrodrimanin C, the dehydrogenated product of 3-hydroxypentacecilide A. The cytochrome P450 monooxygenase cdmJ then accepts both 3-hydroxypentacecilide A and chrodrimanin C and functions as a C-7-beta-hydroxylase to produce respectively chrodrimanin H and chrodrimanin F. The dioxygenase cdmA accepts chrodrimanin H to afford chrodrimanin E, which is further transformed to chrodrimanin A by the dioxygenase cdmD. CdmA can also accept chrodrimanin C as substrate to convert it into verruculide A, which is further converted into chrodrimanin T by cdmD. The last step of the biosynthesis is proposed to be performed by the acetyltransferase cdmC which acetylates chrodrimanin A to yield chrodrimanin B. The pathway may also lead to the production of additional shunt products, including chrodrimanins T and U. The sequence is that of 6-hydroxymellein synthase cdmE from Talaromyces verruculosus (Penicillium verruculosum).